The chain runs to 504 residues: Peptidyl-prolyl cis-trans isomerase-like 4 (504 aa).

In terms of domain architecture, PPIase cyclophilin-type spans 1 to 169 (MSVMLETSLG…QNIRIRHVEI (169 aa)). Residues 246–324 (NILFVCKLNP…RRIWVDFSQS (79 aa)) form the RRM domain. A compositionally biased stretch (polar residues) spans 330-339 (RSMLSSSNPT). A disordered region spans residues 330 to 504 (RSMLSSSNPT…RERDDRDRRR (175 aa)). A compositionally biased stretch (gly residues) spans 340-354 (GRGGRGGRGGRGGNY). 2 stretches are compositionally biased toward basic and acidic residues: residues 356–381 (GRRDGDRDRDRDSGWSSRRDAPDSRR) and 416–504 (SKRD…DRRR).

It belongs to the cyclophilin-type PPIase family. PPIL4 subfamily.

The protein localises to the nucleus. The catalysed reaction is [protein]-peptidylproline (omega=180) = [protein]-peptidylproline (omega=0). PPIases accelerate the folding of proteins. It catalyzes the cis-trans isomerization of proline imidic peptide bonds in oligopeptides. In Cryptococcus neoformans var. neoformans serotype D (strain B-3501A) (Filobasidiella neoformans), this protein is Peptidyl-prolyl cis-trans isomerase-like 4 (CYP6).